We begin with the raw amino-acid sequence, 86 residues long: Small ribosomal subunit protein bS20 (86 aa).

Belongs to the bacterial ribosomal protein bS20 family.

In terms of biological role, binds directly to 16S ribosomal RNA. The protein is Small ribosomal subunit protein bS20 of Aliarcobacter butzleri (strain RM4018) (Arcobacter butzleri).